The following is a 365-amino-acid chain: Mitogen-activated protein kinase HOG1 (365 aa).

The Protein kinase domain occupies 20–306 (YSDLQPVGMG…ATNALAHEYL (287 aa)). ATP is bound by residues 26-34 (VGMGAFGLV) and Lys49. Catalysis depends on Asp148, which acts as the Proton acceptor. A TXY motif is present at residues 178–180 (TGY).

This sequence belongs to the protein kinase superfamily. Ser/Thr protein kinase family. MAP kinase subfamily. HOG1 sub-subfamily. Requires Mg(2+) as cofactor.

It localises to the cytoplasm. It is found in the nucleus. It catalyses the reaction L-seryl-[protein] + ATP = O-phospho-L-seryl-[protein] + ADP + H(+). The catalysed reaction is L-threonyl-[protein] + ATP = O-phospho-L-threonyl-[protein] + ADP + H(+). Proline-directed serine/threonine-protein kinase involved in a signal transduction pathway that is activated by changes in the osmolarity of the extracellular environment. Controls osmotic regulation of transcription of target genes. Involved in environmental stress response, hyphal growth, conidiation and possibly secondary metabolism such as ustiloxin biosynthesis or the biosynthesis of other phytotoxic compounds that are inhibitory to rice shoot growth during seed germination. Plays a key role in responses to cell wall and membrane stresses but not oxidative stress. The chain is Mitogen-activated protein kinase HOG1 from Ustilaginoidea virens (Rice false smut fungus).